The primary structure comprises 194 residues: 3-isopropylmalate dehydratase small subunit (194 aa).

This sequence belongs to the LeuD family. LeuD type 1 subfamily. In terms of assembly, heterodimer of LeuC and LeuD.

It carries out the reaction (2R,3S)-3-isopropylmalate = (2S)-2-isopropylmalate. It participates in amino-acid biosynthesis; L-leucine biosynthesis; L-leucine from 3-methyl-2-oxobutanoate: step 2/4. Catalyzes the isomerization between 2-isopropylmalate and 3-isopropylmalate, via the formation of 2-isopropylmaleate. This Bacillus cereus (strain ATCC 14579 / DSM 31 / CCUG 7414 / JCM 2152 / NBRC 15305 / NCIMB 9373 / NCTC 2599 / NRRL B-3711) protein is 3-isopropylmalate dehydratase small subunit.